Consider the following 564-residue polypeptide: Excitatory amino acid transporter 4 (564 aa).

Residues M1–R55 are Cytoplasmic-facing. S2 carries the phosphoserine modification. 3 helical membrane-spanning segments follow: residues N56 to L76, M99 to L119, and V133 to I153. N216, N232, and N239 each carry an N-linked (GlcNAc...) asparagine glycan. The next 3 helical transmembrane spans lie at S262 to V285, F295 to I322, and L344 to I365. An intramembrane region (discontinuously helical) is located at residues F371–L401. S388–S390 contacts L-aspartate. A helical membrane pass occupies residues I411–F437. G419, T421, and N423 together coordinate Na(+). L-aspartate contacts are provided by residues T427, I468–G472, D501, and N508. An intramembrane region (discontinuously helical) is located at residues I451–G484. The helical transmembrane segment at W498–I519 threads the bilayer. N508 and D512 together coordinate Na(+).

It belongs to the dicarboxylate/amino acid:cation symporter (DAACS) (TC 2.A.23) family. SLC1A6 subfamily. Homotrimer. As to expression, detected in brain, cerebellum and hippocampus.

It localises to the cell membrane. The catalysed reaction is K(+)(in) + L-glutamate(out) + 3 Na(+)(out) + H(+)(out) = K(+)(out) + L-glutamate(in) + 3 Na(+)(in) + H(+)(in). It carries out the reaction K(+)(in) + L-aspartate(out) + 3 Na(+)(out) + H(+)(out) = K(+)(out) + L-aspartate(in) + 3 Na(+)(in) + H(+)(in). It catalyses the reaction D-aspartate(out) + K(+)(in) + 3 Na(+)(out) + H(+)(out) = D-aspartate(in) + K(+)(out) + 3 Na(+)(in) + H(+)(in). In terms of biological role, sodium-dependent, high-affinity amino acid transporter that mediates the uptake of L-glutamate and also L-aspartate and D-aspartate. Functions as a symporter that transports one amino acid molecule together with two or three Na(+) ions and one proton, in parallel with the counter-transport of one K(+) ion. Mediates Cl(-) flux that is not coupled to amino acid transport; this avoids the accumulation of negative charges due to aspartate and Na(+) symport. Plays a redundant role in the rapid removal of released glutamate from the synaptic cleft, which is essential for terminating the postsynaptic action of glutamate. The chain is Excitatory amino acid transporter 4 (SLC1A6) from Canis lupus familiaris (Dog).